Here is a 1177-residue protein sequence, read N- to C-terminus: Lon protease homolog, mitochondrial (1177 aa).

2 disordered regions span residues 72 to 197 (RTNS…KSPA) and 353 to 386 (AKKA…DSST). The segment covering 103–150 (RGRELWVQEKDKSDKPEKSDKPDKTDKTDKDKPEKQDKDKTDKPEKTK) has biased composition (basic and acidic residues). The span at 154 to 182 (TPSSTASTGAGEAAAPPSAPPSGSGSSSS) shows a compositional bias: low complexity. A Lon N-terminal domain is found at 203 to 505 (ILAVPISDRP…RALILLKREH (303 aa)). The segment covering 353–383 (AKKAKSGKTEDSKHDSKVTSKDGKETTEKYD) has biased composition (basic and acidic residues). Residue 657–664 (GPPGVGKT) coordinates ATP. Over residues 883-916 (EKDKESAEKKTTKSKSKEVNEEPAAKEEKDKATE) the composition is skewed to basic and acidic residues. The interval 883 to 932 (EKDKESAEKKTTKSKSKEVNEEPAAKEEKDKATESAESSETKVGTKAPPV) is disordered. The Lon proteolytic domain maps to 964–1150 (DPPPGVVMGL…QDVYDVVFQG (187 aa)). Catalysis depends on residues serine 1056 and lysine 1099.

This sequence belongs to the peptidase S16 family. Homohexamer or homoheptamer. Organized in a ring with a central cavity.

The protein resides in the mitochondrion matrix. The catalysed reaction is Hydrolysis of proteins in presence of ATP.. In terms of biological role, ATP-dependent serine protease that mediates the selective degradation of misfolded, unassembled or oxidatively damaged polypeptides as well as certain short-lived regulatory proteins in the mitochondrial matrix. May also have a chaperone function in the assembly of inner membrane protein complexes. Participates in the regulation of mitochondrial gene expression and in the maintenance of the integrity of the mitochondrial genome. Binds to mitochondrial DNA in a site-specific manner. This chain is Lon protease homolog, mitochondrial, found in Yarrowia lipolytica (strain CLIB 122 / E 150) (Yeast).